The chain runs to 300 residues: Geranylgeranyl diphosphate synthase (300 aa).

K50, R53, and H82 together coordinate isopentenyl diphosphate. 2 residues coordinate Mg(2+): D89 and D95. Residue R100 coordinates (2E,6E)-farnesyl diphosphate. Position 101 (R101) interacts with isopentenyl diphosphate. 3 residues coordinate (2E,6E)-farnesyl diphosphate: K186, T187, and Q224.

It belongs to the FPP/GGPP synthase family. It depends on Mg(2+) as a cofactor.

It is found in the plastid. The protein resides in the cyanelle. The enzyme catalyses isopentenyl diphosphate + (2E,6E)-farnesyl diphosphate = (2E,6E,10E)-geranylgeranyl diphosphate + diphosphate. Its pathway is isoprenoid biosynthesis; geranylgeranyl diphosphate biosynthesis; geranylgeranyl diphosphate from farnesyl diphosphate and isopentenyl diphosphate: step 1/1. In terms of biological role, catalyzes the condensation of farnesyl diphosphate (FPP) and isopentenyl diphosphate (IPP) to yield geranylgeranyl diphosphate (GGPP) needed for biosynthesis of carotenoids and diterpenes. In Cyanophora paradoxa, this protein is Geranylgeranyl diphosphate synthase (crtE).